A 390-amino-acid polypeptide reads, in one-letter code: Phosphopentomutase (390 aa).

Mn(2+) is bound by residues aspartate 11, aspartate 283, histidine 288, aspartate 324, histidine 325, and histidine 336.

Belongs to the phosphopentomutase family. Mn(2+) serves as cofactor.

The protein resides in the cytoplasm. The catalysed reaction is 2-deoxy-alpha-D-ribose 1-phosphate = 2-deoxy-D-ribose 5-phosphate. The enzyme catalyses alpha-D-ribose 1-phosphate = D-ribose 5-phosphate. It participates in carbohydrate degradation; 2-deoxy-D-ribose 1-phosphate degradation; D-glyceraldehyde 3-phosphate and acetaldehyde from 2-deoxy-alpha-D-ribose 1-phosphate: step 1/2. Isomerase that catalyzes the conversion of deoxy-ribose 1-phosphate (dRib-1-P) and ribose 1-phosphate (Rib-1-P) to deoxy-ribose 5-phosphate (dRib-5-P) and ribose 5-phosphate (Rib-5-P), respectively. This chain is Phosphopentomutase, found in Alkaliphilus metalliredigens (strain QYMF).